The following is a 122-amino-acid chain: Large ribosomal subunit protein bL12 (122 aa).

Belongs to the bacterial ribosomal protein bL12 family. As to quaternary structure, homodimer. Part of the ribosomal stalk of the 50S ribosomal subunit. Forms a multimeric L10(L12)X complex, where L10 forms an elongated spine to which 2 to 4 L12 dimers bind in a sequential fashion. Binds GTP-bound translation factors.

Functionally, forms part of the ribosomal stalk which helps the ribosome interact with GTP-bound translation factors. Is thus essential for accurate translation. This chain is Large ribosomal subunit protein bL12, found in Buchnera aphidicola subsp. Baizongia pistaciae (strain Bp).